A 396-amino-acid polypeptide reads, in one-letter code: Protein BOP3 (396 aa).

Disordered regions lie at residues 1 to 22 (MSTF…NNVN), 98 to 126 (GVPA…ENLP), 145 to 168 (PTPM…GISH), 203 to 239 (VARR…KFTN), 254 to 274 (RDQQ…QQDL), and 355 to 396 (REGR…LNST). 3 stretches are compositionally biased toward polar residues: residues 111–124 (QPHN…SSEN), 159–168 (ASSSTGGISH), and 210–230 (GTKS…SRNL). Residues 355 to 369 (REGRQVHDDLDDRTC) are compositionally biased toward basic and acidic residues. Positions 370-396 (SESSSRNESPVRTITKDNSVGKILNST) are enriched in polar residues.

The protein localises to the cytoplasm. The protein resides in the nucleus. Its function is as follows. Involved in resistance to methylmercury. Overexpression suppresses a PAM1-SLV3 double null mutation. The protein is Protein BOP3 (BOP3) of Saccharomyces cerevisiae (strain ATCC 204508 / S288c) (Baker's yeast).